Consider the following 289-residue polypeptide: MERPQPDSSMPQDLSEALKEATKEVHTQAENAEFMKNFQKGELTQEGFKLVMASLYHIYVALEEEIERNKENPVYTPLYFPEELHRRASLEQDMAFWYGPRWQEAIPYTQATKRYVQRLQEVGRTEPELLVAHAYTRYLGDLSGGQVLKKIAQKALNLPSSGEGLAFFTFPNIASATKFKQLYRSRMNTLEMTPEVRQRVLDEAKTAFLLNIQLFEELQGLLTQKAKDHDPLQAPELHRRAGSKVQDLAPTKASRGKPQPSVLSQAPLLRWVLTLSFLVATVAVGLYAM.

The segment covering 1 to 12 has biased composition (polar residues); the sequence is MERPQPDSSMPQ. Residues 1 to 24 are disordered; it reads MERPQPDSSMPQDLSEALKEATKE. At 1-266 the chain is on the cytoplasmic side; sequence MERPQPDSSM…KPQPSVLSQA (266 aa). Heme b-binding residues include lysine 19, histidine 26, tyrosine 135, and arginine 184. The tract at residues 239-261 is disordered; it reads RRAGSKVQDLAPTKASRGKPQPS. Serine 243 carries the phosphoserine modification. A helical; Anchor for type IV membrane protein transmembrane segment spans residues 267–289; sequence PLLRWVLTLSFLVATVAVGLYAM.

This sequence belongs to the heme oxygenase family. As to quaternary structure, homodimer and higher order homooligomer. Oligomerization is crucial for its stability and function in the endoplasmic reticulum. Interacts with FLVCR2; this interaction is potentiated in the presence of heme. In terms of processing, a soluble form arises by proteolytic removal of the membrane anchor.

It is found in the endoplasmic reticulum membrane. The enzyme catalyses heme b + 3 reduced [NADPH--hemoprotein reductase] + 3 O2 = biliverdin IXalpha + CO + Fe(2+) + 3 oxidized [NADPH--hemoprotein reductase] + 3 H2O + H(+). Its activity is regulated as follows. Inhibited by metalloporphyrins such as Sn-, Co-, Mn- and Zn-protoporphyrins. In terms of biological role, catalyzes the oxidative cleavage of heme at the alpha-methene bridge carbon, released as carbon monoxide (CO), to generate biliverdin IXalpha, while releasing the central heme iron chelate as ferrous iron. Affords protection against programmed cell death and this cytoprotective effect relies on its ability to catabolize free heme and prevent it from sensitizing cells to undergo apoptosis. Functionally, catalyzes the oxidative cleavage of heme at the alpha-methene bridge carbon, released as carbon monoxide (CO), to generate biliverdin IXalpha, while releasing the central heme iron chelate as ferrous iron. The protein is Heme oxygenase 1 (HMOX1) of Bos taurus (Bovine).